Consider the following 391-residue polypeptide: Methyltransferase/ribosomally synthesized type I borosin cyclic peptide precursor cmaMA (391 aa).

The segment at 1 to 253 (MDATANPKAG…TISTFYLPPK (253 aa)) is methyltransferase domain. Residues R72, Y76, and Y98 contribute to the active site. Positions 98, 100, 103, 130, 172, 215, 246, and 247 each coordinate S-adenosyl-L-methionine. The interval 254–373 (APSAKVSLNR…AQLSGALKEG (120 aa)) is clasp domain. Residues 374 to 376 (GVP) form a precursor leader region. N-methylleucine is present on L382. 2 positions are modified to N-methylphenylalanine: F385 and F386. N-methylisoleucine occurs at positions 387 and 388.

The protein in the N-terminal section; belongs to the precorrin methyltransferase family. In terms of assembly, homodimer. In terms of processing, cmaMA automethylates at Leu-382, Phe-385, Phe-386, Ile-387 and Ile-388 before being processed by the prolyloligopeptidase ledP which likely forms a peptidyl ester upon removal of the follower propeptide, which then undergoes macrocyclization with the N-terminus of the modified core peptide. Peptide backbone alpha-N-methylations change the physicochemical properties of amide bonds to provide structural constraints and other favorable characteristics including biological membrane permeability to peptides.

Its pathway is secondary metabolite biosynthesis. Its function is as follows. Fusion protein of the methyltransferase cmaM and a type I borosin core peptide; part of the gene cluster that mediates the biosynthesis of a type I borosin, a highly methylated cyclic peptide with potent biological activities. Type I borosins derive from the C-terminus of the fusion protein, and it is the same protein that methylates its own C-terminus using S-adenosyl methionine (SAM). The C-terminus is subsequently cleaved off and macrocyclized by a prolyloligopeptidase to give the final product. This Coprinopsis marcescibilis (Agaric fungus) protein is Methyltransferase/ribosomally synthesized type I borosin cyclic peptide precursor cmaMA.